The chain runs to 355 residues: MAGCCCLSAEEKESQRISAEIERQLRRDKKDARRELKLLLLGTGESGKSTFIKQMRIIHGSGYSDEDRKGFTKLVYQNIFTAMQAMIRAMDTLRIQYVCEQNKENAQIIREVEVDKVSMLSREQVEAIKQLWQDPGIQECYDRRREYQLSDSAKYYLTDIDRIATPSFVPTQQDVLRVRVPTTGIIEYPFDLENIIFRMVDVGGQRSERRKWIHCFESVTSIIFLVALSEYDQVLAECDNENRMEESKALFKTIITYPWFLNSSVILFLNKKDLLEEKIMYSHLISYFPEYTGPKQDVRAARDFILKLYQDQNPDKEKVIYSHFTCATDTDNIRFVFAAVKDTILQLNLREFNLV.

The G-alpha domain occupies 34–355 (RELKLLLLGT…QLNLREFNLV (322 aa)). The segment at 37-50 (KLLLLGTGESGKST) is G1 motif. Residues 42 to 49 (GTGESGKS), 176 to 182 (LRVRVPT), 201 to 205 (DVGGQ), 270 to 273 (NKKD), and A327 contribute to the GTP site. Residue S49 coordinates Mg(2+). The segment at 174 to 182 (DVLRVRVPT) is G2 motif. Residue R179 is modified to ADP-ribosylarginine; by cholera toxin. T182 contacts Mg(2+). The tract at residues 197 to 206 (FRMVDVGGQR) is G3 motif. Residues 266 to 273 (ILFLNKKD) are G4 motif. Residues 325 to 330 (TCATDT) form a G5 motif region.

This sequence belongs to the G-alpha family. G(q) subfamily. In terms of assembly, g proteins are composed of 3 units; alpha, beta and gamma. The alpha chain contains the guanine nucleotide binding site.

In terms of biological role, guanine nucleotide-binding proteins (G proteins) are involved as modulators or transducers in various transmembrane signaling systems. This chain is Guanine nucleotide-binding protein subunit alpha-14 (GNA14), found in Homo sapiens (Human).